Here is an 815-residue protein sequence, read N- to C-terminus: Translation initiation factor IF-2 (815 aa).

The tr-type G domain maps to 315 to 482; it reads ARPPVVTIMG…AISLTAEVLE (168 aa). The segment at 324–331 is G1; that stretch reads GHVDHGKT. 324–331 is a GTP binding site; it reads GHVDHGKT. Residues 349-353 form a G2 region; that stretch reads GITQH. A G3 region spans residues 370–373; that stretch reads DTPG. GTP contacts are provided by residues 370–374 and 424–427; these read DTPGH and NKID. A G4 region spans residues 424-427; the sequence is NKID. Residues 460-462 form a G5 region; the sequence is SAY.

The protein belongs to the TRAFAC class translation factor GTPase superfamily. Classic translation factor GTPase family. IF-2 subfamily.

The protein resides in the cytoplasm. Its function is as follows. One of the essential components for the initiation of protein synthesis. Protects formylmethionyl-tRNA from spontaneous hydrolysis and promotes its binding to the 30S ribosomal subunits. Also involved in the hydrolysis of GTP during the formation of the 70S ribosomal complex. The protein is Translation initiation factor IF-2 of Ruthia magnifica subsp. Calyptogena magnifica.